The sequence spans 352 residues: C-C chemokine receptor type 5 (352 aa).

The Extracellular segment spans residues 1–30 (MDYQVSSPTYDIDYYTSEPCQKINVKQIAA). Tyrosine 3 is subject to Sulfotyrosine. 2 O-linked (GalNAc...) serine glycosylation sites follow: serine 6 and serine 7. Residues tyrosine 10, tyrosine 14, and tyrosine 15 each carry the sulfotyrosine modification. 2 cysteine pairs are disulfide-bonded: cysteine 20–cysteine 269 and cysteine 101–cysteine 178. A helical transmembrane segment spans residues 31 to 58 (RLLPPLYSLVFIFGFVGNILVVLILINC). Topologically, residues 59 to 68 (KRLKSMTDIY) are cytoplasmic. The helical transmembrane segment at 69–89 (LLNLAISDLLFLLTVPFWAHY) threads the bilayer. Residues 90–102 (AAAQWDFGNTMCQ) lie on the Extracellular side of the membrane. A helical membrane pass occupies residues 103–124 (LLTGLYFIGFFSGIFFIILLTI). At 125–141 (DRYLAIVHAVFALKART) the chain is on the cytoplasmic side. The chain crosses the membrane as a helical span at residues 142–166 (VTFGVVTSVITWVVAVFASLPGIIF). The Extracellular portion of the chain corresponds to 167–198 (TRSQREGLHYTCSSHFPYSQYQFWKNFQTLKM). Residues 199-218 (VILGLVLPLLVMVICYSGIL) traverse the membrane as a helical segment. Over 219 to 235 (KTLLRCRNEKKRHRAVR) the chain is Cytoplasmic. Residues 236-260 (LIFTIMIVYFLFWAPYNIVLLLNTF) traverse the membrane as a helical segment. Over 261–277 (QEFFGLNNCSSSNRLDQ) the chain is Extracellular. Residues 278 to 301 (AMQVTETLGMTHCCINPIIYAFVG) traverse the membrane as a helical segment. At 302-352 (EKFRNYLLVFFQKHIAKRFCKCCSIFQQEAPERASSVYTRSTGEQEISVGL) the chain is on the cytoplasmic side. S-palmitoyl cysteine attachment occurs at residues cysteine 321, cysteine 323, and cysteine 324. Residues serine 336, serine 337, serine 342, and serine 349 each carry the phosphoserine; by BARK1 modification.

It belongs to the G-protein coupled receptor 1 family. Interacts with PRAF2. Efficient ligand binding to CCL3/MIP-1alpha and CCL4/MIP-1beta requires sulfation, O-glycosylation and sialic acid modifications. Glycosylation on Ser-6 is required for efficient binding of CCL4. Interacts with GRK2. Interacts with ARRB1 and ARRB2. Interacts with CNIH4. Interacts with S100A4; this interaction stimulates T-lymphocyte chemotaxis. In terms of processing, sulfated on at least 2 of the N-terminal tyrosines. Sulfation is required for efficient binding of the chemokines, CCL3 and CCL4. Post-translationally, palmitoylation in the C-terminal is important for cell surface expression. Phosphorylation on serine residues in the C-terminal is stimulated by binding CC chemokines especially by APO-RANTES. In terms of processing, O-glycosylated, but not N-glycosylated. Ser-6 appears to be the major site even if Ser-7 may be also O-glycosylated. Also sialylated glycans present which contribute to chemokine binding. Thr-16 and Ser-17 may also be glycosylated and, if so, with small moieties such as a T-antigen.

The protein localises to the cell membrane. In terms of biological role, receptor for a number of inflammatory CC-chemokines including CCL3/MIP-1-alpha, CCL4/MIP-1-beta and RANTES and subsequently transduces a signal by increasing the intracellular calcium ion level. May play a role in the control of granulocytic lineage proliferation or differentiation. Participates in T-lymphocyte migration to the infection site by acting as a chemotactic receptor. The protein is C-C chemokine receptor type 5 (CCR5) of Macaca fascicularis (Crab-eating macaque).